Consider the following 364-residue polypeptide: MGVTGILQLPRDRFKRTSFFLWVIILFQRTFSIPLGVIHNSTLQVSDVDKLVCRDKLSSTNQLRSVGLNLEGNGVATDVPSATKRWGFRSGVPPKVVNYEAGEWAENCYNLEIKKPDGSECLPAAPDGIRGFPRCRYVHKVSGTGPCAGDFAFHKEGAFFLYDRLASTVIYRGTTFAEGVVAFLILPQAKKDFFSSHPLREPVNATEDPSSGYYSTTIRYQATGFGTNETEYLFEVDNLTYVQLESRFTPQFLLQLNETIYTSGKRSNTTGKLIWKVNPEIDTTIGEWAFWETKKTSLEKFAVKSCLSQLYQTEPKTSVVRVRRELLPTQGPTQQLKTTKSWLQKIPLQWFKCTVKEGKLQCRI.

Residues 1 to 32 form the signal peptide; sequence MGVTGILQLPRDRFKRTSFFLWVIILFQRTFS. N-linked (GlcNAc...) asparagine; by host glycosylation is present at N40. 2 disulfide bridges follow: C108–C135 and C121–C147. N-linked (GlcNAc...) asparagine; by host glycosylation is found at N204, N228, N238, N257, and N268.

Belongs to the filoviruses glycoprotein family. As to quaternary structure, homodimer; disulfide-linked. The homodimers are linked by two disulfide bonds in a parallel orientation. In terms of assembly, monomer. This precursor is processed into mature sGP and delta-peptide by host furin or furin-like proteases. The cleavage site corresponds to the furin optimal cleavage sequence [KR]-X-[KR]-R. Post-translationally, N-glycosylated. In terms of processing, O-glycosylated.

It is found in the secreted. In terms of biological role, seems to possess an anti-inflammatory activity as it can reverse the barrier-decreasing effects of TNF alpha. Might therefore contribute to the lack of inflammatory reaction seen during infection in spite the of extensive necrosis and massive virus production. Does not seem to be involved in activation of primary macrophages. Does not seem to interact specifically with neutrophils. Its function is as follows. Viroporin that permeabilizes mammalian cell plasma membranes. It acts by altering permeation of ionic compounds and small molecules. This activity may lead to viral enterotoxic activity. The chain is Pre-small/secreted glycoprotein (GP) from Epomops franqueti (Franquet's epauletted fruit bat).